A 332-amino-acid polypeptide reads, in one-letter code: Autoinducer 2 import system permease protein LsrD (332 aa).

Transmembrane regions (helical) follow at residues 5–25, 43–63, 83–103, 116–136, 160–180, 210–230, and 259–279; these read LNWESALLALLIAEILLFGAL, ICIGIVALPLTLVIISGGIDI, GWPLWLAVSLTLLLGLLCGLF, LVITLGTLYLYGGGALLLSGM, LGGLPLPLVLFAIITFFFWLL, IPYVLYGLVGVASAVAALVMV, and IYGGSGSILGTALAALLVGYL.

Belongs to the binding-protein-dependent transport system permease family. AraH/RbsC subfamily. The complex is composed of two ATP-binding proteins (LsrA), two transmembrane proteins (LsrC and LsrD) and a solute-binding protein (LsrB).

It localises to the cell inner membrane. In terms of biological role, part of the ABC transporter complex LsrABCD involved in autoinducer 2 (AI-2) import. Probably responsible for the translocation of the substrate across the membrane. The protein is Autoinducer 2 import system permease protein LsrD (lsrD) of Klebsiella pneumoniae subsp. pneumoniae (strain ATCC 700721 / MGH 78578).